Here is a 229-residue protein sequence, read N- to C-terminus: NAD(P)H-hydrate epimerase (229 aa).

The YjeF N-terminal domain maps to 10–217; sequence AINVDLELFN…ALQRKYELNL (208 aa). 60–64 lines the (6S)-NADPHX pocket; sequence NNGGD. Residues N61 and D125 each coordinate K(+). (6S)-NADPHX contacts are provided by residues 129 to 135 and D158; that span reads GFSFKPP. S161 serves as a coordination point for K(+).

This sequence belongs to the NnrE/AIBP family. The cofactor is K(+).

It carries out the reaction (6R)-NADHX = (6S)-NADHX. The enzyme catalyses (6R)-NADPHX = (6S)-NADPHX. Its function is as follows. Catalyzes the epimerization of the S- and R-forms of NAD(P)HX, a damaged form of NAD(P)H that is a result of enzymatic or heat-dependent hydration. This is a prerequisite for the S-specific NAD(P)H-hydrate dehydratase to allow the repair of both epimers of NAD(P)HX. This chain is NAD(P)H-hydrate epimerase, found in Drosophila virilis (Fruit fly).